The following is a 342-amino-acid chain: Succinoglycan biosynthesis protein ExoU (342 aa).

Belongs to the glycosyltransferase 2 family.

It localises to the cytoplasm. It participates in glycan metabolism; exopolysaccharide biosynthesis. Its function is as follows. Glycosyltransferase required for the synthesis of succinoglycan (EPS I). Needed for the addition of the sixth sugar (glucose), catalyzes the formation of a beta-1,6 linkage between the fifth and sixth sugar. This chain is Succinoglycan biosynthesis protein ExoU (exoU), found in Rhizobium meliloti (strain 1021) (Ensifer meliloti).